Consider the following 312-residue polypeptide: Acetyl-coenzyme A carboxylase carboxyl transferase subunit alpha (312 aa).

Residues 25–286 enclose the CoA carboxyltransferase C-terminal domain; sequence GDDSAVEILK…GNYIIEKLNE (262 aa).

It belongs to the AccA family. In terms of assembly, acetyl-CoA carboxylase is a heterohexamer composed of biotin carboxyl carrier protein (AccB), biotin carboxylase (AccC) and two subunits each of ACCase subunit alpha (AccA) and ACCase subunit beta (AccD).

It is found in the cytoplasm. It catalyses the reaction N(6)-carboxybiotinyl-L-lysyl-[protein] + acetyl-CoA = N(6)-biotinyl-L-lysyl-[protein] + malonyl-CoA. It participates in lipid metabolism; malonyl-CoA biosynthesis; malonyl-CoA from acetyl-CoA: step 1/1. Component of the acetyl coenzyme A carboxylase (ACC) complex. First, biotin carboxylase catalyzes the carboxylation of biotin on its carrier protein (BCCP) and then the CO(2) group is transferred by the carboxyltransferase to acetyl-CoA to form malonyl-CoA. In Campylobacter hominis (strain ATCC BAA-381 / DSM 21671 / CCUG 45161 / LMG 19568 / NCTC 13146 / CH001A), this protein is Acetyl-coenzyme A carboxylase carboxyl transferase subunit alpha.